A 285-amino-acid chain; its full sequence is UPF0173 metal-dependent hydrolase Pnuc_1524 (285 aa).

It belongs to the UPF0173 family.

This chain is UPF0173 metal-dependent hydrolase Pnuc_1524, found in Polynucleobacter asymbioticus (strain DSM 18221 / CIP 109841 / QLW-P1DMWA-1) (Polynucleobacter necessarius subsp. asymbioticus).